The following is a 308-amino-acid chain: N-acetylmuramic acid 6-phosphate etherase (308 aa).

Residues 59-222 enclose the SIS domain; the sequence is TAERLRHGGR…STGVMVKLGK (164 aa). E87 functions as the Proton donor in the catalytic mechanism. Residue E118 is part of the active site.

This sequence belongs to the GCKR-like family. MurNAc-6-P etherase subfamily. As to quaternary structure, homodimer.

The enzyme catalyses N-acetyl-D-muramate 6-phosphate + H2O = N-acetyl-D-glucosamine 6-phosphate + (R)-lactate. The protein operates within amino-sugar metabolism; N-acetylmuramate degradation. Functionally, specifically catalyzes the cleavage of the D-lactyl ether substituent of MurNAc 6-phosphate, producing GlcNAc 6-phosphate and D-lactate. In Nostoc punctiforme (strain ATCC 29133 / PCC 73102), this protein is N-acetylmuramic acid 6-phosphate etherase.